The chain runs to 427 residues: Lactadherin (427 aa).

A signal peptide spans 1-18 (MPCPRLLAALFCSSGLFA). 2 consecutive EGF-like domains span residues 20 to 59 (SGDF…LLCN) and 62 to 106 (EHGP…IHCE). Intrachain disulfides connect Cys24-Cys35, Cys29-Cys47, and Cys49-Cys58. Ser27 is a glycosylation site (O-linked (Fuc...) serine; in PAS-6). Thr34 carries an O-linked (Fuc...) threonine; in PAS-7 glycan. N-linked (GlcNAc...) (hybrid) asparagine; in PAS-6 and PAS-7 glycosylation is present at Asn59. Cystine bridges form between Cys66/Cys77, Cys71/Cys94, Cys96/Cys105, Cys109/Cys265, Cys252/Cys256, and Cys270/Cys427. The Cell attachment site signature appears at 85–87 (RGD). F5/8 type C domains follow at residues 109 to 265 (CTSP…LLGC) and 270 to 427 (CTEP…LLGC). Asn227 carries an N-linked (GlcNAc...) (high mannose) asparagine; in PAS-6 glycan.

Post-translationally, the two O-linked glycans consist of Gal, GlcNAc and Fuc, with probably Fuc as reducing terminal sugar. As to expression, milk and spermatozoan. Also present in epididymis, kidney, heart, lymphatic gland and spleen but not esophagus, small intestine, muscle and liver.

It localises to the membrane. Its subcellular location is the secreted. The protein localises to the cytoplasmic vesicle. The protein resides in the secretory vesicle. It is found in the acrosome membrane. In terms of biological role, contributes to phagocytic removal of apoptotic cells in many tissues. Plays an important role in the maintenance of intestinal epithelial homeostasis and the promotion of mucosal healing. Promotes VEGF-dependent neovascularization. Specific ligand for the alpha-v/beta-3 and alpha-v/beta-5 receptors. Also binds to phosphatidylserine-enriched cell surfaces in a receptor-independent manner. Zona pellucida-binding protein which may play a role in gamete interaction. In Bos taurus (Bovine), this protein is Lactadherin (MFGE8).